The sequence spans 731 residues: 1,4-alpha-glucan branching enzyme GlgB (731 aa).

Aspartate 412 serves as the catalytic Nucleophile. Catalysis depends on glutamate 465, which acts as the Proton donor.

It belongs to the glycosyl hydrolase 13 family. GlgB subfamily. As to quaternary structure, monomer.

It carries out the reaction Transfers a segment of a (1-&gt;4)-alpha-D-glucan chain to a primary hydroxy group in a similar glucan chain.. It functions in the pathway glycan biosynthesis; glycogen biosynthesis. Catalyzes the formation of the alpha-1,6-glucosidic linkages in glycogen by scission of a 1,4-alpha-linked oligosaccharide from growing alpha-1,4-glucan chains and the subsequent attachment of the oligosaccharide to the alpha-1,6 position. The chain is 1,4-alpha-glucan branching enzyme GlgB from Bordetella bronchiseptica (strain ATCC BAA-588 / NCTC 13252 / RB50) (Alcaligenes bronchisepticus).